Here is a 325-residue protein sequence, read N- to C-terminus: Tetraacyldisaccharide 4'-kinase (325 aa).

ATP is bound at residue 55–62 (TAGGNGKT).

The protein belongs to the LpxK family.

It carries out the reaction a lipid A disaccharide + ATP = a lipid IVA + ADP + H(+). The protein operates within glycolipid biosynthesis; lipid IV(A) biosynthesis; lipid IV(A) from (3R)-3-hydroxytetradecanoyl-[acyl-carrier-protein] and UDP-N-acetyl-alpha-D-glucosamine: step 6/6. Its function is as follows. Transfers the gamma-phosphate of ATP to the 4'-position of a tetraacyldisaccharide 1-phosphate intermediate (termed DS-1-P) to form tetraacyldisaccharide 1,4'-bis-phosphate (lipid IVA). This chain is Tetraacyldisaccharide 4'-kinase, found in Salmonella choleraesuis (strain SC-B67).